We begin with the raw amino-acid sequence, 254 residues long: tRNA (guanine-N(1)-)-methyltransferase (254 aa).

S-adenosyl-L-methionine contacts are provided by residues glycine 113 and 133–138; that span reads IGDYVL.

Belongs to the RNA methyltransferase TrmD family. As to quaternary structure, homodimer.

The protein resides in the cytoplasm. It catalyses the reaction guanosine(37) in tRNA + S-adenosyl-L-methionine = N(1)-methylguanosine(37) in tRNA + S-adenosyl-L-homocysteine + H(+). Functionally, specifically methylates guanosine-37 in various tRNAs. This is tRNA (guanine-N(1)-)-methyltransferase from Edwardsiella ictaluri (strain 93-146).